Consider the following 644-residue polypeptide: Fructose-1,6-bisphosphatase class 3 (644 aa).

The protein belongs to the FBPase class 3 family. The cofactor is Mn(2+).

It catalyses the reaction beta-D-fructose 1,6-bisphosphate + H2O = beta-D-fructose 6-phosphate + phosphate. It participates in carbohydrate biosynthesis; gluconeogenesis. The polypeptide is Fructose-1,6-bisphosphatase class 3 (Oceanobacillus iheyensis (strain DSM 14371 / CIP 107618 / JCM 11309 / KCTC 3954 / HTE831)).